A 194-amino-acid polypeptide reads, in one-letter code: Ion-translocating oxidoreductase complex subunit A (194 aa).

The next 6 membrane-spanning stretches (helical) occupy residues 4–24 (LVLI…QFLG), 39–59 (IGLS…SYLV), 71–91 (FLRT…TEMV), 102–122 (VLGI…VALL), 131–151 (FITA…VLVL), and 172–192 (AIGM…AGLI).

The protein belongs to the NqrDE/RnfAE family. In terms of assembly, the complex is composed of six subunits: RnfA, RnfB, RnfC, RnfD, RnfE and RnfG.

It localises to the cell inner membrane. Part of a membrane-bound complex that couples electron transfer with translocation of ions across the membrane. The polypeptide is Ion-translocating oxidoreductase complex subunit A (Ectopseudomonas mendocina (strain ymp) (Pseudomonas mendocina)).